Consider the following 184-residue polypeptide: Photosystem I assembly protein Ycf4 (184 aa).

A run of 2 helical transmembrane segments spans residues 22-42 (FCWAIILFLGSLGFLLIGISS) and 57-77 (ILFFPQGIVMSFYGLAGLFIS).

This sequence belongs to the Ycf4 family.

It localises to the plastid. The protein resides in the chloroplast thylakoid membrane. Its function is as follows. Seems to be required for the assembly of the photosystem I complex. This Populus trichocarpa (Western balsam poplar) protein is Photosystem I assembly protein Ycf4.